A 410-amino-acid chain; its full sequence is MLKGEKVVLAYSGGLDTSVIIPWLKENYECEIIAVCVDVGQREDLRYIKDKALASGASKVYIEDVKEEFVKDYIFPTLKAGAIYEGKYLLGTSMARPLIAKKLVEIAHKEGAKAIAHGATGKGNDQVRFEVSIRALDPSIKIIAPWRIWELKSREDEIEYAKKKGIPIPVTKEKIYSVDSNLWHVSHEGGDLEDPWNEPKSDIYDIVTPPEKVSDKPEYVYIEFEKGIPVKVNGKTLSPVKLIEELNEIGGRNGVGIVDLVENRLVGMKSRGVYETPAGTLLYIAHRELEYLVLDKETMRFKELVAQKYADLVYNGLWFSPLKTALDAFIDETQKNVTGVVRLKLYKGNVINAGAKSPYSLYNEEFATFGKDEVYNQKDAEGFINLFGLSLKIRALMEMGRKDMDEAVGR.

Residue 10–18 participates in ATP binding; it reads AYSGGLDTS. Residues Y88 and S93 each coordinate L-citrulline. G118 contacts ATP. Residues T120, N124, and D125 each contribute to the L-aspartate site. N124 provides a ligand contact to L-citrulline. Positions 128, 177, 186, 262, and 274 each coordinate L-citrulline.

Belongs to the argininosuccinate synthase family. Type 1 subfamily. As to quaternary structure, homotetramer.

It localises to the cytoplasm. It carries out the reaction L-citrulline + L-aspartate + ATP = 2-(N(omega)-L-arginino)succinate + AMP + diphosphate + H(+). It functions in the pathway amino-acid biosynthesis; L-arginine biosynthesis; L-arginine from L-ornithine and carbamoyl phosphate: step 2/3. This chain is Argininosuccinate synthase, found in Caldanaerobacter subterraneus subsp. tengcongensis (strain DSM 15242 / JCM 11007 / NBRC 100824 / MB4) (Thermoanaerobacter tengcongensis).